The sequence spans 572 residues: MRRKRDSYDYVIIGGGSAGSVLGARLSEDKDKNVLVLEAGRSDYFWDLFIQMPAALMFPSGNRFYDWEYQTDEEPHMGRRVDHARGKVLGGSSSINGMIYQRGNPMDYEGWAEPEGMDTWDFAHCLPYFKKLETTYGAAPYDKVRGHDGPIKLKRGPATNPLFKSFFNAGVEAGYHKTADVNGYRQEGFGPFDSQVHHGRRMSASRAYLRPALRRRNLDVETRAFVTKLIFDENNSKKVTGVTFKKNGKEHTVHANEVILSGGAFNTPQLLQLSGIGDSEFLKSKGIEPRMHLPGVGENFEDHLEVYIQHKCKQPVSLQPSLDVKRMPFIGLQWIFARKGAAASNHFEGGGFVRSNDDVDYPNLMFHFLPIAVRYDGQKAPVAHGYQVHVGPMYSNSRGSLKIKSKDPFEKPSIVFNYLSTKEDEREWIEAIRVARNILKQKAMDPFNGGEISPGPQVQTDEEILDWVRKDGETALHPSCSAKMGPASDPMAVVDPLTMKVHGMENLRVVDASAMPRTTNGNIHAPVLMLAEKAADIIRGRKPLEPQYVDYYKHGIDDEKAGAMEDDPFYQY.

9 to 38 (DYVIIGGGSAGSVLGARLSEDKDKNVLVLE) is an FAD binding site. The active-site Proton acceptor is the His477.

It belongs to the GMC oxidoreductase family. The cofactor is FAD.

The catalysed reaction is choline + A = betaine aldehyde + AH2. It carries out the reaction betaine aldehyde + NAD(+) + H2O = glycine betaine + NADH + 2 H(+). It functions in the pathway amine and polyamine biosynthesis; betaine biosynthesis via choline pathway; betaine aldehyde from choline (cytochrome c reductase route): step 1/1. Involved in the biosynthesis of the osmoprotectant glycine betaine. Catalyzes the oxidation of choline to betaine aldehyde and betaine aldehyde to glycine betaine at the same rate. This is Oxygen-dependent choline dehydrogenase from Staphylococcus epidermidis (strain ATCC 35984 / DSM 28319 / BCRC 17069 / CCUG 31568 / BM 3577 / RP62A).